A 425-amino-acid chain; its full sequence is Phosphoribosylamine--glycine ligase (425 aa).

Positions 110–317 (KEFMKRHGIP…LFDALLASVE (208 aa)) constitute an ATP-grasp domain. 137–198 (ETCPTFPQVI…EAFLSGQEAS (62 aa)) contributes to the ATP binding site. 2 residues coordinate Mg(2+): E287 and N289.

The protein belongs to the GARS family. It depends on Mg(2+) as a cofactor. Mn(2+) is required as a cofactor.

It catalyses the reaction 5-phospho-beta-D-ribosylamine + glycine + ATP = N(1)-(5-phospho-beta-D-ribosyl)glycinamide + ADP + phosphate + H(+). It functions in the pathway purine metabolism; IMP biosynthesis via de novo pathway; N(1)-(5-phospho-D-ribosyl)glycinamide from 5-phospho-alpha-D-ribose 1-diphosphate: step 2/2. This is Phosphoribosylamine--glycine ligase from Chlorobaculum tepidum (strain ATCC 49652 / DSM 12025 / NBRC 103806 / TLS) (Chlorobium tepidum).